Here is a 72-residue protein sequence, read N- to C-terminus: Crustacean hyperglycemic hormone B (72 aa).

Pyrrolidone carboxylic acid is present on Gln1. D-phenylalanine; in form CHHB-II is present on Phe3. 3 disulfides stabilise this stretch: Cys7/Cys43, Cys23/Cys39, and Cys26/Cys52. At Val72 the chain carries Valine amide.

Stereoinversion of L-Phe (in CHHB-I) to D-Phe (in CHHB-II).

Its subcellular location is the secreted. In terms of biological role, hormone found in the sinus gland of isopods and decapods which controls the blood sugar level. Has a secretagogue action over the amylase released from the midgut gland. May act as a stress hormone and may be involved in the control of molting and reproduction. The polypeptide is Crustacean hyperglycemic hormone B (Cherax destructor (Common yabby crayfish)).